Here is a 208-residue protein sequence, read N- to C-terminus: MQFVDELISDFDKALRVINGVVFESRPNPGRGLPDGVMSEAEKRHAAGLMRVNNVGEVCAQALYDAQGRFAQKAEIKNAFARAGIEEEDHLAWTAERLRELGSHTSLLNPLWYGGAYVLGSIAARLGDARNLGFVSETERQVEHHLMGHLDKLPAQDNRSRAIVDQMRIDEIEHGQAARDLGAAEMPAPVKGLMKAMAKVMTTVAYRI.

Fe cation is bound by residues Glu57, Glu87, His90, Glu139, Glu171, and His174.

This sequence belongs to the COQ7 family. Fe cation serves as cofactor.

It is found in the cell membrane. It catalyses the reaction a 5-methoxy-2-methyl-3-(all-trans-polyprenyl)benzene-1,4-diol + AH2 + O2 = a 3-demethylubiquinol + A + H2O. The protein operates within cofactor biosynthesis; ubiquinone biosynthesis. In terms of biological role, catalyzes the hydroxylation of 2-nonaprenyl-3-methyl-6-methoxy-1,4-benzoquinol during ubiquinone biosynthesis. This chain is 3-demethoxyubiquinol 3-hydroxylase, found in Herbaspirillum seropedicae.